The following is a 121-amino-acid chain: Small ribosomal subunit protein uS13 (121 aa).

The tract at residues 95-121 (GLPVRGQKTKTNARTRKGKRKTVGAKS) is disordered.

Belongs to the universal ribosomal protein uS13 family. In terms of assembly, part of the 30S ribosomal subunit. Forms a loose heterodimer with protein S19. Forms two bridges to the 50S subunit in the 70S ribosome.

Located at the top of the head of the 30S subunit, it contacts several helices of the 16S rRNA. In the 70S ribosome it contacts the 23S rRNA (bridge B1a) and protein L5 of the 50S subunit (bridge B1b), connecting the 2 subunits; these bridges are implicated in subunit movement. Contacts the tRNAs in the A and P-sites. The sequence is that of Small ribosomal subunit protein uS13 from Campylobacter jejuni subsp. jejuni serotype O:23/36 (strain 81-176).